We begin with the raw amino-acid sequence, 118 residues long: Small ribosomal subunit protein uS13 (118 aa).

The disordered stretch occupies residues 92–118 (RRNLPVRGQNTKNNARTRKGPTRPLKR). Over residues 106-118 (ARTRKGPTRPLKR) the composition is skewed to basic residues.

It belongs to the universal ribosomal protein uS13 family. Part of the 30S ribosomal subunit. Forms a loose heterodimer with protein S19. Forms two bridges to the 50S subunit in the 70S ribosome.

In terms of biological role, located at the top of the head of the 30S subunit, it contacts several helices of the 16S rRNA. In the 70S ribosome it contacts the 23S rRNA (bridge B1a) and protein L5 of the 50S subunit (bridge B1b), connecting the 2 subunits; these bridges are implicated in subunit movement. Contacts the tRNAs in the A and P-sites. The chain is Small ribosomal subunit protein uS13 from Psychrobacter arcticus (strain DSM 17307 / VKM B-2377 / 273-4).